We begin with the raw amino-acid sequence, 264 residues long: tRNA (guanine-N(1)-)-methyltransferase (264 aa).

Residues G116 and 136–141 (VGDFVL) contribute to the S-adenosyl-L-methionine site.

Belongs to the RNA methyltransferase TrmD family. Homodimer.

The protein resides in the cytoplasm. It carries out the reaction guanosine(37) in tRNA + S-adenosyl-L-methionine = N(1)-methylguanosine(37) in tRNA + S-adenosyl-L-homocysteine + H(+). Specifically methylates guanosine-37 in various tRNAs. This Koribacter versatilis (strain Ellin345) protein is tRNA (guanine-N(1)-)-methyltransferase.